Here is a 61-residue protein sequence, read N- to C-terminus: Metallothionein-2 (61 aa).

The residue at position 1 (methionine 1) is an N-acetylmethionine. The interval 1–29 is beta; it reads MDPNCSCATDGSCSCAGSCKCKECKCTTC. Residues cysteine 5, cysteine 7, cysteine 13, cysteine 15, cysteine 19, cysteine 21, cysteine 24, cysteine 26, cysteine 29, cysteine 33, cysteine 34, cysteine 36, cysteine 37, cysteine 41, cysteine 44, cysteine 48, cysteine 50, and cysteine 57 each coordinate a divalent metal cation. The alpha stretch occupies residues 30 to 61; it reads KKSCCSCCPVGCAKCSQGCVCKEASDKCSCCA. Serine 58 is modified (phosphoserine). 2 residues coordinate a divalent metal cation: cysteine 59 and cysteine 60.

It belongs to the metallothionein superfamily. Type 1 family.

In terms of biological role, metallothioneins have a high content of cysteine residues that bind various heavy metals; these proteins are transcriptionally regulated by both heavy metals and glucocorticoids. The protein is Metallothionein-2 (MT2) of Cricetulus griseus (Chinese hamster).